The following is a 305-amino-acid chain: NAD-dependent protein deacylase sirtuin-5, mitochondrial (305 aa).

The N-terminal 32 residues, 1-32 (MIVRQLWCSRGSTSHLCAAVRLNWRSPKMTRP), are a transit peptide targeting the mitochondrion. The 271-residue stretch at 33 to 303 (SSDLTAFREH…PPALERHESE (271 aa)) folds into the Deacetylase sirtuin-type domain. Residue 54–73 (GAGVSAESGVPTFRGPGGFW) participates in NAD(+) binding. The substrate site is built by Tyr-98 and Arg-101. Residue 136–139 (QNID) coordinates NAD(+). His-154 acts as the Proton acceptor in catalysis. Residues Cys-162, Cys-165, Cys-203, and Cys-208 each coordinate Zn(2+). Residues 245–247 (GTS), 271–273 (NME), and Cys-289 contribute to the NAD(+) site.

This sequence belongs to the sirtuin family. Class III subfamily. The cofactor is Zn(2+).

The protein resides in the mitochondrion. It localises to the cytoplasm. The protein localises to the cytosol. Its subcellular location is the nucleus. The catalysed reaction is N(6)-malonyl-L-lysyl-[protein] + NAD(+) + H2O = 2''-O-malonyl-ADP-D-ribose + nicotinamide + L-lysyl-[protein]. It catalyses the reaction N(6)-succinyl-L-lysyl-[protein] + NAD(+) + H2O = 2''-O-succinyl-ADP-D-ribose + nicotinamide + L-lysyl-[protein]. It carries out the reaction N(6)-glutaryl-L-lysyl-[protein] + NAD(+) + H2O = 2''-O-glutaryl-ADP-D-ribose + nicotinamide + L-lysyl-[protein]. Functionally, NAD-dependent lysine demalonylase, desuccinylase and deglutarylase that specifically removes malonyl, succinyl and glutaryl groups on target proteins. Has weak NAD-dependent protein deacetylase activity; however this activity may not be physiologically relevant in vivo. The chain is NAD-dependent protein deacylase sirtuin-5, mitochondrial (sirt5) from Danio rerio (Zebrafish).